Here is a 150-residue protein sequence, read N- to C-terminus: Small ribosomal subunit protein eS6 (150 aa).

It belongs to the eukaryotic ribosomal protein eS6 family.

The sequence is that of Small ribosomal subunit protein eS6 from Caldivirga maquilingensis (strain ATCC 700844 / DSM 13496 / JCM 10307 / IC-167).